A 78-amino-acid chain; its full sequence is Large ribosomal subunit protein bL28 (78 aa).

Positions 1–29 (MSAHCQVTGRQPSFGKSVSHSHRRTSRRW) are disordered.

The protein belongs to the bacterial ribosomal protein bL28 family.

The sequence is that of Large ribosomal subunit protein bL28 from Corynebacterium efficiens (strain DSM 44549 / YS-314 / AJ 12310 / JCM 11189 / NBRC 100395).